The sequence spans 65 residues: Protein MalX (65 aa).

The polypeptide is Protein MalX (malX) (Klebsiella pneumoniae).